The primary structure comprises 534 residues: MKVHNEAAVEAQITELRTITRLQEQCRALQIQGVKEKTAQNKATMGILRSNLRRGAQDWALAKKHDQWTISKACGKDTSMRLAHGRSTLEVAREKLRKYVFDRVNTHNILIHLVRRRGQKLESLQLELASLRNQPDATKDELRQLQIIRQLENNIEKTVIKITTSQNIHTLYKVLLDYLKKVLAEYPTELDKLQNLVANYCSELSDMTVMSQDAMMITDEVKRNMRQGEATFIEERRARENRLNQQKKLIDKIHTKETSEKYRRGRRDLDFPSNLMTMENVKVKKRKTSVADIQYQTKVTTLVERVKSAVQCSHLWDIAGRFLAQKNTEENLELQMEDCEERRTQLEALMKKLELEEAVLKFHQTPSAVGFNSIQKKMKNMLEEEEARLKQAQNNMNKGQQLLLVIQTGIDNLYIRLIGITLPTFQKEIAVSNTLDVYGKLDYCEGKLIYLAERMQTLSRNEEVDTKVRDTLESSTLKEKHNTRITFEDPEEDMIETFQFADVDHSYVPSRAEIKKQAQQLIEAKLKGAKKKKK.

Coiled coils occupy residues 10–54, 136–209, and 321–406; these read EAQI…NLRR, DATK…DMTV, and RFLA…LLVI.

This Mus musculus (Mouse) protein is Coiled-coil domain-containing protein 183 (Ccdc183).